A 176-amino-acid polypeptide reads, in one-letter code: Peptide deformylase 1 (176 aa).

Residues Cys99 and His141 each coordinate Fe cation. Glu142 is a catalytic residue. A Fe cation-binding site is contributed by His145.

It belongs to the polypeptide deformylase family. Requires Fe(2+) as cofactor.

It carries out the reaction N-terminal N-formyl-L-methionyl-[peptide] + H2O = N-terminal L-methionyl-[peptide] + formate. Its function is as follows. Removes the formyl group from the N-terminal Met of newly synthesized proteins. Requires at least a dipeptide for an efficient rate of reaction. N-terminal L-methionine is a prerequisite for activity but the enzyme has broad specificity at other positions. This Nitrosomonas europaea (strain ATCC 19718 / CIP 103999 / KCTC 2705 / NBRC 14298) protein is Peptide deformylase 1.